The chain runs to 88 residues: Small ribosomal subunit protein bS20 (88 aa).

The segment at 1 to 28 (MANTSSAKKATRKIARRTAVNKSRRTQM) is disordered.

Its function is as follows. Binds directly to 16S ribosomal RNA. This chain is Small ribosomal subunit protein bS20, found in Rhodopseudomonas palustris (strain ATCC BAA-98 / CGA009).